Here is a 433-residue protein sequence, read N- to C-terminus: Enolase (433 aa).

Gln166 serves as a coordination point for (2R)-2-phosphoglycerate. Glu208 (proton donor) is an active-site residue. Residues Asp245, Glu289, and Asp316 each coordinate Mg(2+). Residues Lys341, Arg370, Ser371, and Lys392 each coordinate (2R)-2-phosphoglycerate. The active-site Proton acceptor is Lys341.

Belongs to the enolase family. The cofactor is Mg(2+).

The protein localises to the cytoplasm. It is found in the secreted. It localises to the cell surface. The enzyme catalyses (2R)-2-phosphoglycerate = phosphoenolpyruvate + H2O. Its pathway is carbohydrate degradation; glycolysis; pyruvate from D-glyceraldehyde 3-phosphate: step 4/5. Catalyzes the reversible conversion of 2-phosphoglycerate (2-PG) into phosphoenolpyruvate (PEP). It is essential for the degradation of carbohydrates via glycolysis. This is Enolase from Acetivibrio thermocellus (strain ATCC 27405 / DSM 1237 / JCM 9322 / NBRC 103400 / NCIMB 10682 / NRRL B-4536 / VPI 7372) (Clostridium thermocellum).